The primary structure comprises 470 residues: Poly(A) polymerase catalytic subunit (470 aa).

Catalysis depends on residues Asp-192 and Asp-194.

This sequence belongs to the poxviridae poly(A) polymerase catalytic subunit family. In terms of assembly, heterodimer of a large (catalytic) subunit and a small (regulatory) subunit.

It carries out the reaction RNA(n) + ATP = RNA(n)-3'-adenine ribonucleotide + diphosphate. Polymerase that creates the 3'-poly(A) tail of mRNA's. This Odocoileus hemionus (Mule deer) protein is Poly(A) polymerase catalytic subunit (PAPL).